The sequence spans 66 residues: Large ribosomal subunit protein bL33c (66 aa).

It belongs to the bacterial ribosomal protein bL33 family.

The protein resides in the plastid. It is found in the chloroplast. The chain is Large ribosomal subunit protein bL33c from Welwitschia mirabilis (Tree tumbo).